A 362-amino-acid polypeptide reads, in one-letter code: S-adenosylmethionine decarboxylase proenzyme (362 aa).

Catalysis depends on residues Glu11 and Glu14. Ser71 serves as the catalytic Schiff-base intermediate with substrate; via pyruvic acid. A Pyruvic acid (Ser); by autocatalysis modification is found at Ser71. Residue Cys85 is the Proton donor; for catalytic activity of the active site. Residues Ser234 and His247 each act as proton acceptor; for processing activity in the active site.

It belongs to the eukaryotic AdoMetDC family. It depends on pyruvate as a cofactor. In terms of processing, is synthesized initially as an inactive proenzyme. Formation of the active enzyme involves a self-maturation process in which the active site pyruvoyl group is generated from an internal serine residue via an autocatalytic post-translational modification. Two non-identical subunits are generated from the proenzyme in this reaction, and the pyruvate is formed at the N-terminus of the alpha chain, which is derived from the carboxyl end of the proenzyme. The post-translation cleavage follows an unusual pathway, termed non-hydrolytic serinolysis, in which the side chain hydroxyl group of the serine supplies its oxygen atom to form the C-terminus of the beta chain, while the remainder of the serine residue undergoes an oxidative deamination to produce ammonia and the pyruvoyl group blocking the N-terminus of the alpha chain.

The enzyme catalyses S-adenosyl-L-methionine + H(+) = S-adenosyl 3-(methylsulfanyl)propylamine + CO2. The protein operates within amine and polyamine biosynthesis; S-adenosylmethioninamine biosynthesis; S-adenosylmethioninamine from S-adenosyl-L-methionine: step 1/1. In Ipomoea nil (Japanese morning glory), this protein is S-adenosylmethionine decarboxylase proenzyme (SAMDC).